Here is a 763-residue protein sequence, read N- to C-terminus: Dual specificity tyrosine-phosphorylation-regulated kinase 1A (763 aa).

Position 14 is a phosphoserine (serine 14). The segment at 32-57 (GQMPHSHQYSDRRQPNISDQQVSALS) is disordered. Residues 46–57 (PNISDQQVSALS) show a composition bias toward polar residues. Tyrosine 111 carries the phosphotyrosine; by autocatalysis modification. A disordered region spans residues 115 to 136 (KKRRHQQGQGDDSSHKKERKVY). The Bipartite nuclear localization signal motif lies at 117-134 (RRHQQGQGDDSSHKKERK). Tyrosine 140 carries the post-translational modification Phosphotyrosine; by autocatalysis. A Phosphotyrosine modification is found at tyrosine 145. Residue tyrosine 159 is modified to Phosphotyrosine; by autocatalysis. The Protein kinase domain maps to 159 to 479 (YEIDSLIGKG…PYYALQHSFF (321 aa)). 165 to 173 (IGKGSFGQV) contributes to the ATP binding site. The residue at position 177 (tyrosine 177) is a Phosphotyrosine; by autocatalysis. Lysine 188 provides a ligand contact to ATP. Tyrosine 219 carries the post-translational modification Phosphotyrosine; by autocatalysis. Position 238–241 (238–241 (FEML)) interacts with ATP. Aspartate 287 functions as the Proton acceptor in the catalytic mechanism. Serine 310 is subject to Phosphoserine; by autocatalysis. 2 positions are modified to phosphotyrosine; by autocatalysis: tyrosine 319 and tyrosine 321. Threonine 402 carries the phosphothreonine; by autocatalysis modification. Residues 408 to 442 (TKDGKREYKPPGTRKLHNILGVETGGPGGRRAGES) form a disordered region. Residue tyrosine 449 is modified to Phosphotyrosine; by autocatalysis. Residues 485-501 (EGTNTSNSVSTSPAMEQ) show a composition bias toward polar residues. 3 disordered regions span residues 485–540 (EGTN…HSGG), 596–679 (NALH…GNQA), and 744–763 (DREE…VASS). Residues 502–525 (SQSSGTTSSTSSSSGGSSGTSNSG) are compositionally biased toward low complexity. Phosphoserine is present on residues serine 529 and serine 538. The tract at residues 595–625 (QNALHHHHGNSSHHHHHHHHHHHHHGQQALG) is histidine-rich domain (HRD). The span at 598–620 (LHHHHGNSSHHHHHHHHHHHHHG) shows a compositional bias: basic residues. The segment covering 634-645 (NSPTNSSSTQDS) has biased composition (polar residues). The segment covering 654–672 (SMTSLSSSTTSSSTSSSST) has biased composition (low complexity). A phosphoserine mark is found at serine 748 and serine 758. The segment covering 754 to 763 (CVQQSPVASS) has biased composition (polar residues).

It belongs to the protein kinase superfamily. CMGC Ser/Thr protein kinase family. MNB/DYRK subfamily. Interacts with RAD54L2/ARIP4. Interacts with CRY2. Interacts with RANBP9. Interacts with WDR68. Interacts with SIRT1. In terms of assembly, (Microbial infection) Interacts with human adenovirus 5 E1A protein. Post-translationally, autophosphorylated on numerous tyrosine residues. Can also autophosphorylate on serine and threonine residues (in vitro). As to expression, ubiquitous. Highest levels in skeletal muscle, testis, fetal lung and fetal kidney.

It localises to the nucleus. Its subcellular location is the nucleus speckle. The catalysed reaction is L-seryl-[protein] + ATP = O-phospho-L-seryl-[protein] + ADP + H(+). It carries out the reaction L-threonyl-[protein] + ATP = O-phospho-L-threonyl-[protein] + ADP + H(+). The enzyme catalyses L-tyrosyl-[protein] + ATP = O-phospho-L-tyrosyl-[protein] + ADP + H(+). It catalyses the reaction [DNA-directed RNA polymerase] + ATP = phospho-[DNA-directed RNA polymerase] + ADP + H(+). Its activity is regulated as follows. Inhibited by RANBP9. Inhibited by harmine, leucettamine B and leucettine L41. In terms of biological role, dual-specificity kinase which possesses both serine/threonine and tyrosine kinase activities. Exhibits a substrate preference for proline at position P+1 and arginine at position P-3. Plays an important role in double-strand breaks (DSBs) repair following DNA damage. Mechanistically, phosphorylates RNF169 and increases its ability to block accumulation of TP53BP1 at the DSB sites thereby promoting homologous recombination repair (HRR). Also acts as a positive regulator of transcription by acting as a CTD kinase that mediates phosphorylation of the CTD (C-terminal domain) of the large subunit of RNA polymerase II (RNAP II) POLR2A. May play a role in a signaling pathway regulating nuclear functions of cell proliferation. Modulates alternative splicing by phosphorylating the splice factor SRSF6. Has pro-survival function and negatively regulates the apoptotic process. Promotes cell survival upon genotoxic stress through phosphorylation of SIRT1. This in turn inhibits p53/TP53 activity and apoptosis. Phosphorylates SEPTIN4, SEPTIN5 and SF3B1 at 'Thr-434'. The chain is Dual specificity tyrosine-phosphorylation-regulated kinase 1A from Homo sapiens (Human).